The sequence spans 157 residues: Endoribonuclease YbeY (157 aa).

Zn(2+) is bound by residues H114, H118, and H124.

Belongs to the endoribonuclease YbeY family. Zn(2+) serves as cofactor.

Its subcellular location is the cytoplasm. In terms of biological role, single strand-specific metallo-endoribonuclease involved in late-stage 70S ribosome quality control and in maturation of the 3' terminus of the 16S rRNA. The chain is Endoribonuclease YbeY from Yersinia pseudotuberculosis serotype O:3 (strain YPIII).